The following is a 625-amino-acid chain: Prothrombin (625 aa).

Positions 1–24 (MARVRGPRLPGCLALAALFSLVHS) are cleaved as a signal peptide. The propeptide occupies 25–43 (QHVFLAHQQASSLLQRARR). The Gla domain occupies 44 to 90 (ANKGFLEEVRKGNLERECLEEPCSREEAFEALESLSATDAFWAKYTA). E50, E51, E58, E60, E63, E64, E69, E70, E73, and E76 each carry 4-carboxyglutamate. Residues C61 and C66 are joined by a disulfide bond. Intrachain disulfides connect C91–C104, C109–C187, C130–C170, C158–C182, C214–C292, C235–C275, C263–C287, C339–C485, C394–C410, C539–C553, and C567–C597. Kringle domains follow at residues 109–187 (CAEG…VPVC) and 214–292 (CVPD…LNYC). N120 and N144 each carry an N-linked (GlcNAc...) asparagine glycan. Residues 367–621 (IVEGQDAEVG…LKKWIQKVID (255 aa)) enclose the Peptidase S1 domain. The Charge relay system role is filled by H409. N-linked (GlcNAc...) asparagine glycosylation occurs at N419. The Charge relay system role is filled by D465. The segment at 554–576 (AGYKPGEGKRGDACEGDSGGPFV) is high affinity receptor-binding region which is also known as the TP508 peptide. The active-site Charge relay system is the S571.

It belongs to the peptidase S1 family. In terms of assembly, heterodimer (named alpha-thrombin) of a light and a heavy chain; disulfide-linked. Forms a heterodimer with SERPINA5. In plasma, interacts (via N-terminus) with alpha-1-microglobulin; this interaction does not prevent the activation of prothrombin to thrombin. The gamma-carboxyglutamyl residues, which bind calcium ions, result from the carboxylation of glutamyl residues by a microsomal enzyme, the vitamin K-dependent carboxylase. The modified residues are necessary for the calcium-dependent interaction with a negatively charged phospholipid surface, which is essential for the conversion of prothrombin to thrombin. In terms of processing, in the penultimate step of the coagulation cascade, prothrombin is converted to thrombin by the prothrombinase complex composed of factor Xa (F10), cofactor Va (F5), and phospholipids. This activation requires factor Xa-catalyzed sequential cleavage at 2 sites, Arg-317 and Arg-366, along 2 possible pathways. In the first pathway, the first cleavage occurs at Arg-317, leading to the formation of the inactive intermediate prethrombin-2. This pathway preferentially occurs on platelets and in the absence of cofactor Va. In the second pathway, the first cleavage occurs at Arg-366, which separates protease domain into 2 chains that remain connected through a disulfide bond and generates the active intermediate meizothrombin. The presence of cofactor Va directs activation along the meizothrombin pathway and greatly accelerates the rate of cleavage at Arg-366, but has a smaller effect on the cleavage of meizothrombin at Arg-317. Meizothrombin accumulates as an intermediate when prothrombinase is assembled on the membrane of red blood cells. As to expression, expressed by the liver and secreted in plasma.

It localises to the secreted. The protein resides in the extracellular space. The enzyme catalyses Selective cleavage of Arg-|-Gly bonds in fibrinogen to form fibrin and release fibrinopeptides A and B.. With respect to regulation, activity is promoted in the presence of negatively charged surfaces, such as polyphosphate and dextran sulfate. Inhibited by SERPINA5. Its function is as follows. Thrombin, which cleaves bonds after Arg and Lys, converts fibrinogen to fibrin and activates factors V, VII, VIII, XIII, and, in complex with thrombomodulin, protein C. Functions in blood homeostasis, inflammation and wound healing. Activates coagulation factor XI (F11); activation is promoted by the contact with negatively charged surfaces. Triggers the production of pro-inflammatory cytokines, such as MCP-1/CCL2 and IL8/CXCL8, in endothelial cells. The polypeptide is Prothrombin (F2) (Bos taurus (Bovine)).